We begin with the raw amino-acid sequence, 127 residues long: Fluoride-specific ion channel FluC (127 aa).

4 helical membrane passes run L4–M24, L35–F55, T71–L91, and I103–A123. The Na(+) site is built by G75 and T78.

The protein belongs to the fluoride channel Fluc/FEX (TC 1.A.43) family.

It localises to the cell inner membrane. The enzyme catalyses fluoride(in) = fluoride(out). Na(+) is not transported, but it plays an essential structural role and its presence is essential for fluoride channel function. Functionally, fluoride-specific ion channel. Important for reducing fluoride concentration in the cell, thus reducing its toxicity. This is Fluoride-specific ion channel FluC from Enterobacter sp. (strain 638).